We begin with the raw amino-acid sequence, 625 residues long: DNA mismatch repair protein MutL (625 aa).

The protein belongs to the DNA mismatch repair MutL/HexB family.

This protein is involved in the repair of mismatches in DNA. It is required for dam-dependent methyl-directed DNA mismatch repair. May act as a 'molecular matchmaker', a protein that promotes the formation of a stable complex between two or more DNA-binding proteins in an ATP-dependent manner without itself being part of a final effector complex. The sequence is that of DNA mismatch repair protein MutL from Xanthomonas axonopodis pv. citri (strain 306).